The following is a 628-amino-acid chain: MVAFSALSGVSALSLLLCLVQHAHGVSLKVSTQGGNSSSPILYGFMFEDINHSGDGGIYGQLLQNPGLQGTTPNLTAWAAVGDATIAIDGDSPLTSAIPSTIKLDVADDATGAVGLTNEGYWGIPVDGSEFQSSFWIKGDYSGDITVRLVGNYTGTEYGSATITHTSTADNFTQASVKFPTTKAPDGNVLYELTVDGSVAAGSSLNFGYLTLFGETYKSRENGLKPQLANVLADMKGSFLRFPGGNNLEGNSAENRWKWNETIGDLWDRPGREGTWTYYNTDGLGLHEYFYWCEDLGLVPVLGVWDGFALESGGNTPITGDALTPYIDDVLNELEYILGDTSTTYGAWRAANGQEEPWNLTMVEIGNEDMLGGGCESYAERFTAFYDAIHAAYPDLILIASTSEADCLPESMPEGSWVDYHDYSTPDGLVGQFNYFDNLYRSVPYFIGEYSRWEIDWPNMKGSVSEAVFMIGFERNSDVVKMAAYAPLLQLVNSTQWTPDLIGYTQSPDDIFLSTSYYVQEMFSRNRGDTIKEVTSDSDFGPLYWVASSAGDSYYVKLANYGSETQDLTVSIPGTSTGKLTVLADNDPDAYNSDTQTLVTPSESTVQASNGTFTFSLPAWAVAVLAAN.

The signal sequence occupies residues 1-25 (MVAFSALSGVSALSLLLCLVQHAHG). N-linked (GlcNAc...) asparagine glycans are attached at residues asparagine 36, asparagine 51, asparagine 74, asparagine 152, asparagine 171, asparagine 260, asparagine 359, and asparagine 493.

This sequence belongs to the glycosyl hydrolase 51 family.

The protein localises to the secreted. It catalyses the reaction Hydrolysis of terminal non-reducing alpha-L-arabinofuranoside residues in alpha-L-arabinosides.. Its pathway is glycan metabolism; L-arabinan degradation. In terms of biological role, alpha-L-arabinofuranosidase involved in the degradation of arabinoxylan, a major component of plant hemicellulose. Acts only on small linear 1,5-alpha-linked L-arabinofuranosyl oligosaccharides. This chain is Probable alpha-L-arabinofuranosidase A (abfA), found in Aspergillus awamori (Black koji mold).